A 565-amino-acid chain; its full sequence is Periplasmic trehalase (565 aa).

The first 30 residues, methionine 1–alanine 30, serve as a signal peptide directing secretion. Substrate is bound by residues arginine 152, tryptophan 159–aspartate 160, asparagine 196, arginine 205–glutamine 207, arginine 277–glutamate 279, and glycine 310. Active-site proton donor/acceptor residues include aspartate 312 and glutamate 496. Glutamate 511 lines the substrate pocket. The segment at aspartate 540–proline 565 is disordered. A compositionally biased stretch (polar residues) spans threonine 548–proline 565.

The protein belongs to the glycosyl hydrolase 37 family. Monomer.

It is found in the periplasm. The catalysed reaction is alpha,alpha-trehalose + H2O = alpha-D-glucose + beta-D-glucose. In terms of biological role, provides the cells with the ability to utilize trehalose at high osmolarity by splitting it into glucose molecules that can subsequently be taken up by the phosphotransferase-mediated uptake system. The protein is Periplasmic trehalase of Shigella flexneri serotype 5b (strain 8401).